Consider the following 212-residue polypeptide: Thymidylate kinase (212 aa).

11 to 18 (GPDGAGKT) is a binding site for ATP.

The protein belongs to the thymidylate kinase family.

The catalysed reaction is dTMP + ATP = dTDP + ADP. Its function is as follows. Phosphorylation of dTMP to form dTDP in both de novo and salvage pathways of dTTP synthesis. This Streptococcus mutans serotype c (strain ATCC 700610 / UA159) protein is Thymidylate kinase.